The chain runs to 417 residues: Phosphoribosylamine--glycine ligase (417 aa).

The ATP-grasp domain maps to 108-307 (KRIMDEAGVP…LSTLLFAAAT (200 aa)). 134–188 (LDEFGAPYVVKADGLAAGKGVIVTEDRAAALAHAARYLTHGSVLVEEFLDGEEVS) contributes to the ATP binding site. The Mg(2+) site is built by glutamate 277 and asparagine 279.

The protein belongs to the GARS family. Mg(2+) is required as a cofactor. Requires Mn(2+) as cofactor.

The catalysed reaction is 5-phospho-beta-D-ribosylamine + glycine + ATP = N(1)-(5-phospho-beta-D-ribosyl)glycinamide + ADP + phosphate + H(+). It participates in purine metabolism; IMP biosynthesis via de novo pathway; N(1)-(5-phospho-D-ribosyl)glycinamide from 5-phospho-alpha-D-ribose 1-diphosphate: step 2/2. In Leifsonia xyli subsp. xyli (strain CTCB07), this protein is Phosphoribosylamine--glycine ligase.